Here is a 314-residue protein sequence, read N- to C-terminus: Fructose-1,6-bisphosphatase class 1 (314 aa).

Positions 91, 112, 114, and 115 each coordinate Mg(2+). Substrate is bound by residues 115-118 (DGSS), tyrosine 223, and lysine 254. Glutamate 260 is a Mg(2+) binding site.

This sequence belongs to the FBPase class 1 family. As to quaternary structure, homotetramer. Requires Mg(2+) as cofactor.

It is found in the cytoplasm. The catalysed reaction is beta-D-fructose 1,6-bisphosphate + H2O = beta-D-fructose 6-phosphate + phosphate. It functions in the pathway carbohydrate biosynthesis; gluconeogenesis. The polypeptide is Fructose-1,6-bisphosphatase class 1 (Geobacter metallireducens (strain ATCC 53774 / DSM 7210 / GS-15)).